We begin with the raw amino-acid sequence, 345 residues long: MNFSLLSTMLMALSSVCLFFVGYAQQFSGSVAVSALFAFGDSILDTGNNNNLNTLSKCNFFPYGRNFIGGKATGRFGNGRVFSDMIAEGLNVKKLLPAYRDPNLSKNDLPTGVCFASGGSGLDERTARSQGVIWVPDQVKDFKEYIMKLNGVVRDKRKVNAIISNAVYLISAGNNDLAITYPTLMAQYTVSTYTDLLVTWTDNLLKSLYAMGARKFAVLGTLPLGCLPGARHTGGNFGNICLVPINQVAAIFNQKLSAKLNNLHTILPGAKFVYVDMYNPLLNLINNPRASGFIDVADGCCCMPTSPVPCPDASQYVFWDFAHPSEKSYMTIAPKIIEGIKKNLA.

The first 24 residues, 1-24 (MNFSLLSTMLMALSSVCLFFVGYA), serve as a signal peptide directing secretion. Catalysis depends on S42, which acts as the Nucleophile. An N-linked (GlcNAc...) asparagine glycan is attached at N103. Active-site residues include D320 and H323.

This sequence belongs to the 'GDSL' lipolytic enzyme family.

Its subcellular location is the secreted. This Arabidopsis thaliana (Mouse-ear cress) protein is GDSL esterase/lipase At1g23500.